The chain runs to 298 residues: Ribosomal RNA small subunit methyltransferase H (298 aa).

S-adenosyl-L-methionine is bound by residues 31-33 (GGH), Asp50, Tyr80, Asp95, and Gln102. The disordered stretch occupies residues 255 to 298 (AEKDLYGNTNKPFKSVGKAIDPDDEEKERNNRARSARLRIAERE).

The protein belongs to the methyltransferase superfamily. RsmH family.

Its subcellular location is the cytoplasm. It carries out the reaction cytidine(1402) in 16S rRNA + S-adenosyl-L-methionine = N(4)-methylcytidine(1402) in 16S rRNA + S-adenosyl-L-homocysteine + H(+). Its function is as follows. Specifically methylates the N4 position of cytidine in position 1402 (C1402) of 16S rRNA. The chain is Ribosomal RNA small subunit methyltransferase H from Cytophaga hutchinsonii (strain ATCC 33406 / DSM 1761 / CIP 103989 / NBRC 15051 / NCIMB 9469 / D465).